Reading from the N-terminus, the 488-residue chain is ATP synthase subunit beta (488 aa).

Gly-164–Thr-171 contacts ATP.

Belongs to the ATPase alpha/beta chains family. In terms of assembly, F-type ATPases have 2 components, CF(1) - the catalytic core - and CF(0) - the membrane proton channel. CF(1) has five subunits: alpha(3), beta(3), gamma(1), delta(1), epsilon(1). CF(0) has four main subunits: a(1), b(1), b'(1) and c(9-12).

Its subcellular location is the cellular thylakoid membrane. The catalysed reaction is ATP + H2O + 4 H(+)(in) = ADP + phosphate + 5 H(+)(out). Functionally, produces ATP from ADP in the presence of a proton gradient across the membrane. The catalytic sites are hosted primarily by the beta subunits. The polypeptide is ATP synthase subunit beta (Prochlorococcus marinus (strain MIT 9211)).